The sequence spans 79 residues: uncharacterized protein (79 aa).

This is an uncharacterized protein from Ovis aries (Sheep).